Here is a 376-residue protein sequence, read N- to C-terminus: Ribonucleoside-diphosphate reductase 1 subunit beta (376 aa).

3 residues coordinate Fe cation: aspartate 85, glutamate 116, and histidine 119. Tyrosine 123 is an active-site residue. 3 residues coordinate Fe cation: glutamate 205, glutamate 239, and histidine 242.

Belongs to the ribonucleoside diphosphate reductase small chain family. As to quaternary structure, tetramer of two alpha (R1) and two beta (R2) subunits. The B1 protein is a dimer of alpha subunits. A radical transfer pathway occurs between Tyr-123 of R2 and R1. It depends on Fe cation as a cofactor.

It catalyses the reaction a 2'-deoxyribonucleoside 5'-diphosphate + [thioredoxin]-disulfide + H2O = a ribonucleoside 5'-diphosphate + [thioredoxin]-dithiol. Functionally, provides the precursors necessary for DNA synthesis. Catalyzes the biosynthesis of deoxyribonucleotides from the corresponding ribonucleotides. R2 contains the tyrosyl radical required for catalysis. This chain is Ribonucleoside-diphosphate reductase 1 subunit beta (nrdB), found in Escherichia coli O157:H7.